The sequence spans 449 residues: Elongation factor 1-alpha (449 aa).

Residues 5–230 (KVHINIVVIG…DQIQEPKRPS (226 aa)) enclose the tr-type G domain. The segment at 14–21 (GHVDSGKS) is G1. 14 to 21 (GHVDSGKS) lines the GTP pocket. Lys-55 is modified (N6,N6-dimethyllysine). Residues 70–74 (GITID) are G2. An N6,N6,N6-trimethyllysine modification is found at Lys-79. Residues 91 to 94 (DAPG) are G3. Residues 91-95 (DAPGH) and 153-156 (NKMD) each bind GTP. A G4 region spans residues 153 to 156 (NKMD). Lys-187 carries the post-translational modification N6,N6,N6-trimethyllysine. Residues 194–196 (SGF) form a G5 region. Lys-261 is modified (N6-methyllysine). Glu-289 bears the 5-glutamyl glycerylphosphorylethanolamine mark. Position 306 is an N6,N6,N6-trimethyllysine (Lys-306). Glu-362 is modified (5-glutamyl glycerylphosphorylethanolamine). At Lys-396 the chain carries N6,N6,N6-trimethyllysine.

This sequence belongs to the TRAFAC class translation factor GTPase superfamily. Classic translation factor GTPase family. EF-Tu/EF-1A subfamily.

It localises to the cytoplasm. Functionally, this protein promotes the GTP-dependent binding of aminoacyl-tRNA to the A-site of ribosomes during protein biosynthesis. In Manihot esculenta (Cassava), this protein is Elongation factor 1-alpha (EF1).